The chain runs to 367 residues: Membrane-bound lytic murein transglycosylase C (367 aa).

A signal peptide spans 1 to 19; it reads MRKYAKYLPFCLVVPFLAA. Residue C20 is the site of N-palmitoyl cysteine attachment. A lipid anchor (S-diacylglycerol cysteine) is attached at C20.

It belongs to the transglycosylase Slt family.

It is found in the cell outer membrane. The catalysed reaction is Exolytic cleavage of the (1-&gt;4)-beta-glycosidic linkage between N-acetylmuramic acid (MurNAc) and N-acetylglucosamine (GlcNAc) residues in peptidoglycan, from either the reducing or the non-reducing ends of the peptidoglycan chains, with concomitant formation of a 1,6-anhydrobond in the MurNAc residue.. Murein-degrading enzyme. May play a role in recycling of muropeptides during cell elongation and/or cell division. This is Membrane-bound lytic murein transglycosylase C from Haemophilus ducreyi (strain 35000HP / ATCC 700724).